The primary structure comprises 193 residues: Potassium-transporting ATPase KdpC subunit (193 aa).

Residues 10 to 30 (AAIIIFSVLTGVIYPALVTVI) traverse the membrane as a helical segment.

The protein belongs to the KdpC family. As to quaternary structure, the system is composed of three essential subunits: KdpA, KdpB and KdpC.

The protein resides in the cell membrane. Its function is as follows. Part of the high-affinity ATP-driven potassium transport (or Kdp) system, which catalyzes the hydrolysis of ATP coupled with the electrogenic transport of potassium into the cytoplasm. This subunit acts as a catalytic chaperone that increases the ATP-binding affinity of the ATP-hydrolyzing subunit KdpB by the formation of a transient KdpB/KdpC/ATP ternary complex. The chain is Potassium-transporting ATPase KdpC subunit from Herpetosiphon aurantiacus (strain ATCC 23779 / DSM 785 / 114-95).